The chain runs to 361 residues: Tyrosine--tRNA ligase (361 aa).

5 residues coordinate L-tyrosine: tyrosine 36, tyrosine 162, glutamine 166, aspartate 169, and glutamine 184. The short motif at 235-239 is the 'KMSKS' region element; it reads KMSKS. Lysine 238 provides a ligand contact to ATP.

The protein belongs to the class-I aminoacyl-tRNA synthetase family. TyrS type 4 subfamily. As to quaternary structure, homodimer.

It localises to the cytoplasm. It carries out the reaction tRNA(Tyr) + L-tyrosine + ATP = L-tyrosyl-tRNA(Tyr) + AMP + diphosphate + H(+). Catalyzes the attachment of tyrosine to tRNA(Tyr) in a two-step reaction: tyrosine is first activated by ATP to form Tyr-AMP and then transferred to the acceptor end of tRNA(Tyr). This chain is Tyrosine--tRNA ligase, found in Sulfolobus acidocaldarius (strain ATCC 33909 / DSM 639 / JCM 8929 / NBRC 15157 / NCIMB 11770).